The primary structure comprises 193 residues: Cysteine and glycine-rich protein 1 (193 aa).

In terms of domain architecture, LIM zinc-binding 1 spans 10–61; the sequence is CGVCQKTVYFAEEVQCEGNSFHKSCFLCMVCKKNLDSTTVAVHGEEIYCKSC. A Nuclear localization signal motif is present at residues 64–69; it reads KKYGPK. Ser81 bears the Phosphoserine mark. The residue at position 84 (Lys84) is an N6-acetyllysine. Lys91 participates in a covalent cross-link: Glycyl lysine isopeptide (Lys-Gly) (interchain with G-Cter in SUMO2). 4 positions are modified to N6-acetyllysine: Lys112, Lys131, Lys137, and Lys161. Residues 119–170 form the LIM zinc-binding 2 domain; sequence CPRCSQAVYAAEKVIGAGKSWHKSCFRCAKCGKGLESTTLADKDGEIYCKGC. Residue Ser192 is modified to Phosphoserine.

In terms of assembly, interacts with ASCC1; ASCC2 and TRIP4.

The protein resides in the nucleus. Its function is as follows. Could play a role in neuronal development. The polypeptide is Cysteine and glycine-rich protein 1 (Csrp1) (Mus musculus (Mouse)).